Consider the following 396-residue polypeptide: Elongation factor Tu 2 (396 aa).

Residues 10–206 (KPHCNVGTIG…AVDDYIPQPE (197 aa)) enclose the tr-type G domain. Residues 19–26 (GHVDHGKT) form a G1 region. 19–26 (GHVDHGKT) contributes to the GTP binding site. Thr-26 contacts Mg(2+). Residues 60-64 (GITIS) are G2. The interval 81 to 84 (DCPG) is G3. GTP is bound by residues 81-85 (DCPGH) and 136-139 (NKCD). A G4 region spans residues 136-139 (NKCD). Residues 174–176 (SAL) form a G5 region.

This sequence belongs to the TRAFAC class translation factor GTPase superfamily. Classic translation factor GTPase family. EF-Tu/EF-1A subfamily. Monomer.

It localises to the cytoplasm. The catalysed reaction is GTP + H2O = GDP + phosphate + H(+). GTP hydrolase that promotes the GTP-dependent binding of aminoacyl-tRNA to the A-site of ribosomes during protein biosynthesis. The chain is Elongation factor Tu 2 from Rhodospirillum rubrum (strain ATCC 11170 / ATH 1.1.1 / DSM 467 / LMG 4362 / NCIMB 8255 / S1).